The chain runs to 184 residues: Protein FAM89A (184 aa).

The tract at residues 148-184 (YFQEQNSLHDRRDRGPPRDLSLPVSSLSSSDWILESI) is disordered. The segment covering 154–164 (SLHDRRDRGPP) has biased composition (basic and acidic residues). The span at 167–184 (LSLPVSSLSSSDWILESI) shows a compositional bias: low complexity.

The protein belongs to the FAM89 family.

This Homo sapiens (Human) protein is Protein FAM89A (FAM89A).